We begin with the raw amino-acid sequence, 68 residues long: DNA-directed RNA polymerase subunit omega (68 aa).

The protein belongs to the RNA polymerase subunit omega family. In terms of assembly, the RNAP catalytic core consists of 2 alpha, 1 beta, 1 beta' and 1 omega subunit. When a sigma factor is associated with the core the holoenzyme is formed, which can initiate transcription.

It catalyses the reaction RNA(n) + a ribonucleoside 5'-triphosphate = RNA(n+1) + diphosphate. Functionally, promotes RNA polymerase assembly. Latches the N- and C-terminal regions of the beta' subunit thereby facilitating its interaction with the beta and alpha subunits. This Alkaliphilus metalliredigens (strain QYMF) protein is DNA-directed RNA polymerase subunit omega.